A 1077-amino-acid polypeptide reads, in one-letter code: Endo-1,4-beta-xylanase Y (1077 aa).

An N-terminal signal peptide occupies residues 1–26 (MKNKRVLAKITALVVLLGVFFVLPSN). Positions 33-180 (DYEVVHDTFE…IFDDVTITRK (148 aa)) constitute a CBM-cenC 1 domain. The GH10 domain occupies 189 to 538 (YAANAVLKDM…KPAYNAVASI (350 aa)). Glu337 functions as the Proton donor in the catalytic mechanism. The active-site Nucleophile is Glu460. Residues 543-563 (EWGDGNNPAGGGGGGKPEEPD) are disordered. In terms of domain architecture, CBM-cenC 2 spans 565-714 (NGYYYHDTFE…YIDEAIGAVA (150 aa)). Residues 728–796 (PPVLLGDVNG…LLRVIDKFPV (69 aa)) form the Dockerin domain.

Belongs to the glycosyl hydrolase 10 (cellulase F) family.

It catalyses the reaction Endohydrolysis of (1-&gt;4)-beta-D-xylosidic linkages in xylans.. The protein is Endo-1,4-beta-xylanase Y (xynY) of Acetivibrio thermocellus (Hungateiclostridium thermocellum).